A 325-amino-acid polypeptide reads, in one-letter code: tRNA (guanine-N(7)-)-methyltransferase (325 aa).

Residues 1 to 101 (MSEATDKQKQ…LEYPKSPESM (101 aa)) form a disordered region. Polar residues predominate over residues 51-69 (VSTTPEPEQSDSSATTATI). S-adenosyl-L-methionine contacts are provided by residues Gly-122, 145–146 (EI), 199–200 (NA), and Cys-219. Asp-222 is a catalytic residue. 297–299 (TEE) serves as a coordination point for S-adenosyl-L-methionine.

It belongs to the class I-like SAM-binding methyltransferase superfamily. TrmB family. Forms a complex with TRM82.

The protein localises to the nucleus. It carries out the reaction guanosine(46) in tRNA + S-adenosyl-L-methionine = N(7)-methylguanosine(46) in tRNA + S-adenosyl-L-homocysteine. It functions in the pathway tRNA modification; N(7)-methylguanine-tRNA biosynthesis. In terms of biological role, catalyzes the formation of N(7)-methylguanine at position 46 (m7G46) in tRNA. This chain is tRNA (guanine-N(7)-)-methyltransferase, found in Candida albicans (strain SC5314 / ATCC MYA-2876) (Yeast).